The primary structure comprises 304 residues: UDP-N-acetylenolpyruvoylglucosamine reductase (304 aa).

An FAD-binding PCMH-type domain is found at 28–193 (KTGGPADYLA…LTATFALTPG (166 aa)). Arg172 is an active-site residue. Residue Ser222 is the Proton donor of the active site. Residue Glu292 is part of the active site.

The protein belongs to the MurB family. Requires FAD as cofactor.

It localises to the cytoplasm. The catalysed reaction is UDP-N-acetyl-alpha-D-muramate + NADP(+) = UDP-N-acetyl-3-O-(1-carboxyvinyl)-alpha-D-glucosamine + NADPH + H(+). Its pathway is cell wall biogenesis; peptidoglycan biosynthesis. Its function is as follows. Cell wall formation. The sequence is that of UDP-N-acetylenolpyruvoylglucosamine reductase from Levilactobacillus brevis (strain ATCC 367 / BCRC 12310 / CIP 105137 / JCM 1170 / LMG 11437 / NCIMB 947 / NCTC 947) (Lactobacillus brevis).